A 369-amino-acid polypeptide reads, in one-letter code: Putative F-box protein At1g70960 (369 aa).

The F-box domain maps to 3–54; it reads NTSFETLPRHMQMEILSRVPLKFLMKFMCVSKKWASIIRGEEFREDYLFQSM.

The polypeptide is Putative F-box protein At1g70960 (Arabidopsis thaliana (Mouse-ear cress)).